A 689-amino-acid chain; its full sequence is tRNA 5-methylaminomethyl-2-thiouridine biosynthesis bifunctional protein MnmC (689 aa).

A tRNA (mnm(5)s(2)U34)-methyltransferase region spans residues 1-245 (MNQRPIQTAT…KREMLTGTLP (245 aa)). The FAD-dependent cmnm(5)s(2)U34 oxidoreductase stretch occupies residues 270-689 (IGGGIVSALT…RSPATQESSR (420 aa)).

In the N-terminal section; belongs to the methyltransferase superfamily. tRNA (mnm(5)s(2)U34)-methyltransferase family. This sequence in the C-terminal section; belongs to the DAO family. Requires FAD as cofactor.

The protein localises to the cytoplasm. The enzyme catalyses 5-aminomethyl-2-thiouridine(34) in tRNA + S-adenosyl-L-methionine = 5-methylaminomethyl-2-thiouridine(34) in tRNA + S-adenosyl-L-homocysteine + H(+). Functionally, catalyzes the last two steps in the biosynthesis of 5-methylaminomethyl-2-thiouridine (mnm(5)s(2)U) at the wobble position (U34) in tRNA. Catalyzes the FAD-dependent demodification of cmnm(5)s(2)U34 to nm(5)s(2)U34, followed by the transfer of a methyl group from S-adenosyl-L-methionine to nm(5)s(2)U34, to form mnm(5)s(2)U34. This chain is tRNA 5-methylaminomethyl-2-thiouridine biosynthesis bifunctional protein MnmC, found in Yersinia pseudotuberculosis serotype O:1b (strain IP 31758).